Reading from the N-terminus, the 202-residue chain is Glycerol-3-phosphate acyltransferase (202 aa).

Helical transmembrane passes span 2–22 (INLL…AVVV), 51–71 (KAAI…VLLA), 80–100 (VDET…LFPL), 116–136 (ILFA…LIIA), 137–157 (FFFR…PFFY), and 158–178 (VLMN…VLLI).

It belongs to the PlsY family. In terms of assembly, probably interacts with PlsX.

It is found in the cell inner membrane. The catalysed reaction is an acyl phosphate + sn-glycerol 3-phosphate = a 1-acyl-sn-glycero-3-phosphate + phosphate. It participates in lipid metabolism; phospholipid metabolism. Catalyzes the transfer of an acyl group from acyl-phosphate (acyl-PO(4)) to glycerol-3-phosphate (G3P) to form lysophosphatidic acid (LPA). This enzyme utilizes acyl-phosphate as fatty acyl donor, but not acyl-CoA or acyl-ACP. The chain is Glycerol-3-phosphate acyltransferase from Cupriavidus metallidurans (strain ATCC 43123 / DSM 2839 / NBRC 102507 / CH34) (Ralstonia metallidurans).